Here is a 76-residue protein sequence, read N- to C-terminus: Acyl carrier protein (76 aa).

Residues 1 to 76 enclose the Carrier domain; it reads MATFDDVKDV…AAVDYIDNNQ (76 aa). Residue serine 36 is modified to O-(pantetheine 4'-phosphoryl)serine.

The protein belongs to the acyl carrier protein (ACP) family. Post-translationally, 4'-phosphopantetheine is transferred from CoA to a specific serine of apo-ACP by AcpS. This modification is essential for activity because fatty acids are bound in thioester linkage to the sulfhydryl of the prosthetic group.

The protein resides in the cytoplasm. The protein operates within lipid metabolism; fatty acid biosynthesis. Its function is as follows. Carrier of the growing fatty acid chain in fatty acid biosynthesis. In Deinococcus radiodurans (strain ATCC 13939 / DSM 20539 / JCM 16871 / CCUG 27074 / LMG 4051 / NBRC 15346 / NCIMB 9279 / VKM B-1422 / R1), this protein is Acyl carrier protein.